Here is a 47-residue protein sequence, read N- to C-terminus: Rhodotorucin-A peptides type 3 (47 aa).

Positions 1–3 (MVA) are excised as a propeptide. Cysteine 14 carries the S-farnesyl cysteine lipid modification. Positions 15–18 (TVAK) are excised as a propeptide. Cysteine 29 is lipidated: S-farnesyl cysteine. Positions 30-33 (TVSK) are excised as a propeptide. Cysteine 44 is lipidated: S-farnesyl cysteine. A propeptide spanning residues 45 to 47 (TVA) is cleaved from the precursor.

The protein resides in the cell membrane. Rhodotorucin-A is a mating pheromone in cells of mating type A of Rhodosporidium toruloides. The polypeptide is Rhodotorucin-A peptides type 3 (RHA3) (Rhodotorula toruloides (Yeast)).